Here is a 310-residue protein sequence, read N- to C-terminus: Malate dehydrogenase (310 aa).

Residues 7–12 (GAGNVG) and Asp32 each bind NAD(+). Residues Arg81 and Arg87 each coordinate substrate. Residues Asn94 and 117–119 (VSN) each bind NAD(+). The substrate site is built by Asn119 and Arg150. His174 (proton acceptor) is an active-site residue.

The protein belongs to the LDH/MDH superfamily. MDH type 3 family. Homotetramer; arranged as a dimer of dimers.

The catalysed reaction is (S)-malate + NAD(+) = oxaloacetate + NADH + H(+). Functionally, catalyzes the reversible oxidation of malate to oxaloacetate. The polypeptide is Malate dehydrogenase (Prosthecochloris vibrioformis (Chlorobium vibrioforme)).